The following is a 314-amino-acid chain: Putative S-adenosyl-L-methionine-dependent methyltransferase MAP_4191c (314 aa).

S-adenosyl-L-methionine-binding positions include Asp138 and 167 to 168 (DL).

Belongs to the UPF0677 family.

In terms of biological role, exhibits S-adenosyl-L-methionine-dependent methyltransferase activity. The chain is Putative S-adenosyl-L-methionine-dependent methyltransferase MAP_4191c from Mycolicibacterium paratuberculosis (strain ATCC BAA-968 / K-10) (Mycobacterium paratuberculosis).